Reading from the N-terminus, the 876-residue chain is Inter-alpha-trypsin inhibitor heavy chain H3 (876 aa).

Residues Met-1–Gly-18 form the signal peptide. Positions Phe-19–Ser-31 are excised as a propeptide. A VIT domain is found at Leu-26 to Glu-155. An N-linked (GlcNAc...) asparagine glycan is attached at Asn-88. In terms of domain architecture, VWFA spans Asn-281 to Val-464. The N-linked (GlcNAc...) asparagine glycan is linked to Asn-577. The residue at position 637 (Asp-637) is an Aspartate 1-(chondroitin 4-sulfate)-ester. A propeptide spanning residues Pro-638 to Phe-876 is cleaved from the precursor.

Belongs to the ITIH family. I-alpha-I plasma protease inhibitors are assembled from one or two heavy chains (HC) and one light chain, bikunin. Pre-alpha-inhibitor (P-alpha-I) is composed of ITIH3/HC3 and bikunin. In terms of processing, heavy chains are linked to bikunin via chondroitin 4-sulfate esterified to the alpha-carboxyl of the C-terminal aspartate after propeptide cleavage.

The protein localises to the secreted. Functionally, may act as a carrier of hyaluronan in serum or as a binding protein between hyaluronan and other matrix protein, including those on cell surfaces in tissues to regulate the localization, synthesis and degradation of hyaluronan which are essential to cells undergoing biological processes. The chain is Inter-alpha-trypsin inhibitor heavy chain H3 (ITIH3) from Pongo abelii (Sumatran orangutan).